We begin with the raw amino-acid sequence, 128 residues long: Fluoride-specific ion channel FluC (128 aa).

4 helical membrane passes run 4–24 (LILAIIVGCGGFIGAALRYLI), 37–57 (PYGTLIVNIVGAIIIGFIMDI), 63–83 (LISGHTKLFLTTGMMGGLTTF), and 99–119 (ILMGCTNAALNLGLSLVGVII). Gly-78 and Thr-81 together coordinate Na(+).

Belongs to the fluoride channel Fluc/FEX (TC 1.A.43) family.

It is found in the cell membrane. It catalyses the reaction fluoride(in) = fluoride(out). With respect to regulation, na(+) is not transported, but it plays an essential structural role and its presence is essential for fluoride channel function. Fluoride-specific ion channel. Important for reducing fluoride concentration in the cell, thus reducing its toxicity. This Clostridium novyi (strain NT) protein is Fluoride-specific ion channel FluC.